The primary structure comprises 638 residues: Phosphomethylpyrimidine synthase (638 aa).

Substrate contacts are provided by residues N243, M272, Y301, H337, 357 to 359, 398 to 401, and E437; these read SRG and DGLR. Position 441 (H441) interacts with Zn(2+). Y464 provides a ligand contact to substrate. H505 contributes to the Zn(2+) binding site. [4Fe-4S] cluster is bound by residues C585, C588, and C593.

The protein belongs to the ThiC family. Homodimer. It depends on [4Fe-4S] cluster as a cofactor.

It carries out the reaction 5-amino-1-(5-phospho-beta-D-ribosyl)imidazole + S-adenosyl-L-methionine = 4-amino-2-methyl-5-(phosphooxymethyl)pyrimidine + CO + 5'-deoxyadenosine + formate + L-methionine + 3 H(+). The protein operates within cofactor biosynthesis; thiamine diphosphate biosynthesis. Catalyzes the synthesis of the hydroxymethylpyrimidine phosphate (HMP-P) moiety of thiamine from aminoimidazole ribotide (AIR) in a radical S-adenosyl-L-methionine (SAM)-dependent reaction. The polypeptide is Phosphomethylpyrimidine synthase (Dechloromonas aromatica (strain RCB)).